A 247-amino-acid chain; its full sequence is PF03932 family protein CutC (247 aa).

This sequence belongs to the CutC family.

It is found in the cytoplasm. In Vibrio parahaemolyticus serotype O3:K6 (strain RIMD 2210633), this protein is PF03932 family protein CutC.